A 116-amino-acid polypeptide reads, in one-letter code: Nucleoid-associated protein P9301_00191 (116 aa).

The protein belongs to the YbaB/EbfC family. In terms of assembly, homodimer.

It localises to the cytoplasm. The protein localises to the nucleoid. Binds to DNA and alters its conformation. May be involved in regulation of gene expression, nucleoid organization and DNA protection. This is Nucleoid-associated protein P9301_00191 from Prochlorococcus marinus (strain MIT 9301).